We begin with the raw amino-acid sequence, 743 residues long: Ribosome biogenesis protein BOP1 homolog (743 aa).

WD repeat units follow at residues Gly365 to Arg404, Lys575 to Lys615, Ser617 to Lys655, Ser659 to Lys701, and Lys712 to Glu743.

The protein belongs to the WD repeat BOP1/ERB1 family.

The protein localises to the nucleus. It localises to the nucleolus. The protein resides in the nucleoplasm. Functionally, required for maturation of ribosomal RNAs and formation of the large ribosomal subunit. The protein is Ribosome biogenesis protein BOP1 homolog of Leishmania braziliensis.